A 431-amino-acid polypeptide reads, in one-letter code: Citrate synthase 1 (431 aa).

Catalysis depends on residues His309 and Asp366.

This sequence belongs to the citrate synthase family. As to quaternary structure, homohexamer.

It catalyses the reaction oxaloacetate + acetyl-CoA + H2O = citrate + CoA + H(+). It participates in carbohydrate metabolism; tricarboxylic acid cycle; isocitrate from oxaloacetate: step 1/2. This is Citrate synthase 1 (gltA2) from Mycobacterium tuberculosis (strain CDC 1551 / Oshkosh).